Consider the following 133-residue polypeptide: Gamma-crystallin 1 (133 aa).

The 41-residue stretch at 1-41 (WMLYEHPNYTGHQYFLRRGEYPDFQQWMGLNDSIRSCRVIP) folds into the Beta/gamma crystallin 'Greek key' 2 domain. Residues 42–46 (QHRGS) are connecting peptide. Beta/gamma crystallin 'Greek key' domains are found at residues 47–87 (FRLR…NVLE) and 88–130 (GHWI…RRVQ).

Belongs to the beta/gamma-crystallin family. Monomer.

Crystallins are the dominant structural components of the vertebrate eye lens. The polypeptide is Gamma-crystallin 1 (Rana temporaria (European common frog)).